The sequence spans 257 residues: MSVPLILTLLAGAATFIGAFLGVLGQKPSNRMLAFSLGFAAGIMLLISLMEMLPAALDTEGMSPVLGYGMFIIGLLGYFGLDRLLPHAHPQDLVQKRQQPLPGSIKRTAILLTLGISLHNFPEGIATFVTASSNLELGFGIALAVALHNIPEGLAVAGPVYAATGSKRTAIFWAGISGMAEILGGVLAWLILGSLVSPIVMAAIMAAVAGIMVALSVDELMPLAKEIDPNNNPSYGVLCGMSIMGLSLVILQTIGIG.

Transmembrane regions (helical) follow at residues 5–25, 33–53, 61–81, 109–129, 137–157, 171–191, 195–215, and 236–256; these read LILT…GVLG, LAFS…MEML, GMSP…YFGL, AILL…ATFV, LGFG…LAVA, IFWA…AWLI, LVSP…MVAL, and GVLC…TIGI. Residues Asn-120 and Glu-123 each coordinate Fe(2+). Glu-123 and His-148 together coordinate Zn(2+). Fe(2+) is bound by residues Asn-149, Glu-152, and Glu-181. Glu-152 is a Zn(2+) binding site.

This sequence belongs to the ZIP transporter (TC 2.A.5) family. ZupT subfamily.

It is found in the cell inner membrane. It catalyses the reaction Zn(2+)(in) = Zn(2+)(out). Mediates zinc uptake. May also transport other divalent cations. The chain is Zinc transporter ZupT from Salmonella paratyphi A (strain ATCC 9150 / SARB42).